We begin with the raw amino-acid sequence, 251 residues long: CDP-diacylglycerol pyrophosphatase (251 aa).

Residues 4 to 24 (AGLLFLVMIVIAVVAAGIGYW) form a helical membrane-spanning segment.

It belongs to the Cdh family.

Its subcellular location is the cell inner membrane. The catalysed reaction is a CDP-1,2-diacyl-sn-glycerol + H2O = a 1,2-diacyl-sn-glycero-3-phosphate + CMP + 2 H(+). It functions in the pathway phospholipid metabolism; CDP-diacylglycerol degradation; phosphatidate from CDP-diacylglycerol: step 1/1. This Escherichia coli O7:K1 (strain IAI39 / ExPEC) protein is CDP-diacylglycerol pyrophosphatase.